Here is a 359-residue protein sequence, read N- to C-terminus: MAP kinase-activated protein kinase 2 (359 aa).

The Protein kinase domain maps to V20 to I281. ATP-binding positions include L26–V34 and K49. The active-site Proton acceptor is the D142.

It belongs to the protein kinase superfamily. CAMK Ser/Thr protein kinase family. Phosphorylated and activated by MAP kinase.

It carries out the reaction L-seryl-[protein] + ATP = O-phospho-L-seryl-[protein] + ADP + H(+). It catalyses the reaction L-threonyl-[protein] + ATP = O-phospho-L-threonyl-[protein] + ADP + H(+). Functionally, its physiological substrate seems to be the small heat shock protein (HSP27/HSP25). This is MAP kinase-activated protein kinase 2 (MAPk-Ak2) from Drosophila melanogaster (Fruit fly).